The chain runs to 490 residues: Acetyl-coenzyme A carboxylase carboxyl transferase subunit beta, chloroplastic (490 aa).

A disordered region spans residues L184–L203. The region spanning L221–K490 is the CoA carboxyltransferase N-terminal domain. Residues C225, C228, C244, and C247 each contribute to the Zn(2+) site. The C4-type zinc finger occupies C225–C247.

This sequence belongs to the AccD/PCCB family. Acetyl-CoA carboxylase is a heterohexamer composed of biotin carboxyl carrier protein, biotin carboxylase and 2 subunits each of ACCase subunit alpha and ACCase plastid-coded subunit beta (accD). It depends on Zn(2+) as a cofactor.

Its subcellular location is the plastid. The protein localises to the chloroplast stroma. The catalysed reaction is N(6)-carboxybiotinyl-L-lysyl-[protein] + acetyl-CoA = N(6)-biotinyl-L-lysyl-[protein] + malonyl-CoA. Its pathway is lipid metabolism; malonyl-CoA biosynthesis; malonyl-CoA from acetyl-CoA: step 1/1. In terms of biological role, component of the acetyl coenzyme A carboxylase (ACC) complex. Biotin carboxylase (BC) catalyzes the carboxylation of biotin on its carrier protein (BCCP) and then the CO(2) group is transferred by the transcarboxylase to acetyl-CoA to form malonyl-CoA. The polypeptide is Acetyl-coenzyme A carboxylase carboxyl transferase subunit beta, chloroplastic (Solanum bulbocastanum (Wild potato)).